We begin with the raw amino-acid sequence, 181 residues long: Adenylate kinase 2 (181 aa).

10–15 (GSGKST) contacts ATP. The NMP stretch occupies residues 30-59 (SMGGILREAIANATPLGIKAKPYVERGDLL). Residues R36, 57–59 (DLL), 85–88 (GYPR), and Q92 each bind AMP. Positions 126-132 (NRSLFDD) are LID. Position 127 (R127) interacts with ATP. R140 contacts AMP. Position 168 (P168) interacts with ATP.

Belongs to the adenylate kinase family. Monomer.

The protein resides in the cytoplasm. It catalyses the reaction AMP + ATP = 2 ADP. The protein operates within purine metabolism; AMP biosynthesis via salvage pathway; AMP from ADP: step 1/1. Functionally, catalyzes the reversible transfer of the terminal phosphate group between ATP and AMP. Plays an important role in cellular energy homeostasis and in adenine nucleotide metabolism. This is Adenylate kinase 2 from Synechocystis sp. (strain ATCC 27184 / PCC 6803 / Kazusa).